We begin with the raw amino-acid sequence, 574 residues long: E3 ubiquitin-protein ligase NEURL1 (574 aa).

Residues 1 to 18 (MGNNFSSVSSLQRGNPSR) show a composition bias toward polar residues. The segment at 1–53 (MGNNFSSVSSLQRGNPSRASRGHPQNLKDSIGGSFPVPSHRCHHKQKHCPPTL) is disordered. Residue Gly2 is the site of N-myristoyl glycine attachment. NHR domains are found at residues 61-217 (TPLL…QLLD) and 292-447 (GDLR…RILG). Residues 520–560 (ECTICYEHAVDTVIYTCGHMCLCYSCGLRLKKALHACCPIC) form an RING-type zinc finger.

As to quaternary structure, interacts with CPEB3 (via N-terminal domain); the interaction increases CPEB3 ubiquitination. Interacts with DLL1. Myristoylation is a determinant of membrane targeting. As to expression, expressed in CA1 pyramidal neurons (at protein level). Expressed throughout the adult forebrain, including the cerebral cortex, amygdala, striatum, and CA1 area of the hippocampus. Expressed in sensory neurons of the olfactory epithelium, the vomeronasal organ, mammary gland and skeletal muscle.

It localises to the cytoplasm. The protein resides in the perinuclear region. The protein localises to the cell membrane. It is found in the perikaryon. Its subcellular location is the cell projection. It localises to the dendrite. The protein resides in the postsynaptic density. The enzyme catalyses S-ubiquitinyl-[E2 ubiquitin-conjugating enzyme]-L-cysteine + [acceptor protein]-L-lysine = [E2 ubiquitin-conjugating enzyme]-L-cysteine + N(6)-ubiquitinyl-[acceptor protein]-L-lysine.. It participates in protein modification; protein ubiquitination. Its function is as follows. Plays a role in hippocampal-dependent synaptic plasticity, learning and memory. Involved in the formation of spines and functional synaptic contacts by modulating the translational activity of the cytoplasmic polyadenylation element-binding protein CPEB3. Promotes ubiquitination of CPEB3, and hence induces CPEB3-dependent mRNA translation activation of glutamate receptor GRIA1 and GRIA2. Can function as an E3 ubiquitin-protein ligase to activate monoubiquitination of JAG1 (in vitro), thereby regulating the Notch pathway. Acts as a tumor suppressor; inhibits malignant cell transformation of medulloblastoma (MB) cells by inhibiting the Notch signaling pathway. This Mus musculus (Mouse) protein is E3 ubiquitin-protein ligase NEURL1 (Neurl1).